The following is a 583-amino-acid chain: 2-succinyl-5-enolpyruvyl-6-hydroxy-3-cyclohexene-1-carboxylate synthase (583 aa).

Belongs to the TPP enzyme family. MenD subfamily. As to quaternary structure, homodimer. It depends on Mg(2+) as a cofactor. Requires Mn(2+) as cofactor. Thiamine diphosphate serves as cofactor.

The enzyme catalyses isochorismate + 2-oxoglutarate + H(+) = 5-enolpyruvoyl-6-hydroxy-2-succinyl-cyclohex-3-ene-1-carboxylate + CO2. It functions in the pathway quinol/quinone metabolism; 1,4-dihydroxy-2-naphthoate biosynthesis; 1,4-dihydroxy-2-naphthoate from chorismate: step 2/7. Its pathway is quinol/quinone metabolism; menaquinone biosynthesis. Its function is as follows. Catalyzes the thiamine diphosphate-dependent decarboxylation of 2-oxoglutarate and the subsequent addition of the resulting succinic semialdehyde-thiamine pyrophosphate anion to isochorismate to yield 2-succinyl-5-enolpyruvyl-6-hydroxy-3-cyclohexene-1-carboxylate (SEPHCHC). The sequence is that of 2-succinyl-5-enolpyruvyl-6-hydroxy-3-cyclohexene-1-carboxylate synthase from Chlorobium chlorochromatii (strain CaD3).